A 234-amino-acid polypeptide reads, in one-letter code: uncharacterized protein (234 aa).

Residues 199 to 234 (DNQNEPLENYSDDNNFSNFDETEHVDDSEMNDDNFI) form a disordered region.

This is an uncharacterized protein from Buchnera aphidicola subsp. Schizaphis graminum (strain Sg).